We begin with the raw amino-acid sequence, 408 residues long: Argininosuccinate synthase (408 aa).

Residues A10 to S18 and A37 contribute to the ATP site. L-citrulline-binding residues include Y90 and S95. Residue G120 participates in ATP binding. L-aspartate-binding residues include T122, N126, and D127. Position 126 (N126) interacts with L-citrulline. Positions 130, 181, 190, 266, and 278 each coordinate L-citrulline.

This sequence belongs to the argininosuccinate synthase family. Type 1 subfamily. Homotetramer.

Its subcellular location is the cytoplasm. The enzyme catalyses L-citrulline + L-aspartate + ATP = 2-(N(omega)-L-arginino)succinate + AMP + diphosphate + H(+). Its pathway is amino-acid biosynthesis; L-arginine biosynthesis; L-arginine from L-ornithine and carbamoyl phosphate: step 2/3. The sequence is that of Argininosuccinate synthase from Cereibacter sphaeroides (strain ATCC 17029 / ATH 2.4.9) (Rhodobacter sphaeroides).